Consider the following 540-residue polypeptide: MKSRKKVVVGVSGDRISGLPDALICHILSFLPTKEAASTTVLAKRWKPLLAFVPNLNFDDSIYFHPRARRNKYSKSYESFMSFVDSVLALQAKTKTPLKRFHVKCEDVVDQSWVLEWIPKVLKRGVLDIDLHITSSRNYCENSSFYSLPSKIFVSKTLVRLKIQFQDGVHIDVEGGVSLPKLKTLHLDYFKIETSMLNKLLSGCHALEELVLANLMWADSSEDEACHVSVSIPTLKRLNFCRSEDFYEGEFHFYEDYDEENINEGVSLSFDNPNLVYLEYSDVIVDKYKQVSFDSLVEANLRLRKTPDQDETDKVNVTKLLMGIHNVKILYLSDDTLEVLSCCRERIPVFDNLLELTIKTTPYVGWKSLPPLLKSCPSLETLVFEGLHHKYTKRCGDKDGCLCKYENHWGTKKKKNVRTCLSSSLVKVLKILKFGETFEDENEDGLDVDHDDYDDEDAVSCDEVGGVVEEQIEHVKHFLETMPVLKQVILYYNTPKDEDVMKVFKKLEKLPRVASANCNVQISSKNLSLSSTSTKRGTLL.

The 49-residue stretch at 13–61 folds into the F-box domain; sequence GDRISGLPDALICHILSFLPTKEAASTTVLAKRWKPLLAFVPNLNFDDS. LRR repeat units lie at residues 80 to 105, 137 to 165, 189 to 214, 217 to 242, 254 to 282, 329 to 360, and 361 to 386; these read FMSF…HVKC, RNYC…KIQF, YFKI…VLAN, WADS…NFCR, YEDY…EYSD, ILYL…TIKT, and TPYV…VFEG.

The protein is Putative F-box/LRR-repeat protein At5g41840 of Arabidopsis thaliana (Mouse-ear cress).